Here is a 60-residue protein sequence, read N- to C-terminus: Cytotoxin 8 (60 aa).

4 disulfide bridges follow: Cys-3–Cys-21, Cys-14–Cys-38, Cys-42–Cys-53, and Cys-54–Cys-59.

Belongs to the three-finger toxin family. Short-chain subfamily. Type IA cytotoxin sub-subfamily. Monomer in solution; Homodimer and oligomer in the presence of negatively charged lipids forming a pore with a size ranging between 20 and 30 Angstroms. As to expression, expressed by the venom gland.

Its subcellular location is the secreted. It is found in the target cell membrane. Functionally, shows cytolytic activity on many different cells by forming pore in lipid membranes. In vivo, increases heart rate or kills the animal by cardiac arrest. In addition, it binds to heparin with high affinity, interacts with Kv channel-interacting protein 1 (KCNIP1) in a calcium-independent manner, and binds to integrin alpha-V/beta-3 (ITGAV/ITGB3) with moderate affinity. Has hemolytic activity towards human erythrocytes (EC(50)=0.074 uM) and cytolytic activity towards various cell lines. This is Cytotoxin 8 from Naja naja (Indian cobra).